Here is a 91-residue protein sequence, read N- to C-terminus: Em-like protein (91 aa).

Basic and acidic residues-rich tracts occupy residues 1–18 (MEQQQDRRELDAKAREGE) and 31–51 (DAQERLAEGRSRGGQTRKEQI). The tract at residues 1 to 91 (MEQQQDRREL…PIDESKYRHP (91 aa)) is disordered. Over residues 62 to 73 (KGGLSSAGGPGG) the composition is skewed to gly residues. Residues 75-91 (RASEEGRPIDESKYRHP) show a composition bias toward basic and acidic residues.

It belongs to the small hydrophilic plant seed protein family.

In Picea glauca (White spruce), this protein is Em-like protein.